The following is a 216-amino-acid chain: Adenylate kinase (216 aa).

ATP is bound at residue 13–18 (GAGKGT). The interval 33 to 66 (TTGDALRANKDMDISDMDTEYDTPREYMEAGDLV) is NMP. AMP-binding positions include Thr-34, Arg-39, 64–66 (DLV), 89–92 (GYPR), and Gln-96. The LID stretch occupies residues 125–162 (GRRVCDDCGTNYHVEFNQPEEDGVCDECGGDLIQRDDD). Arg-126 lines the ATP pocket. The Zn(2+) site is built by Cys-129, Cys-132, Cys-149, and Cys-152. 2 residues coordinate AMP: Arg-159 and Arg-170. Residue Gln-198 coordinates ATP.

The protein belongs to the adenylate kinase family. Monomer.

It localises to the cytoplasm. It carries out the reaction AMP + ATP = 2 ADP. Its pathway is purine metabolism; AMP biosynthesis via salvage pathway; AMP from ADP: step 1/1. Its function is as follows. Catalyzes the reversible transfer of the terminal phosphate group between ATP and AMP. Plays an important role in cellular energy homeostasis and in adenine nucleotide metabolism. The chain is Adenylate kinase from Haloarcula marismortui (strain ATCC 43049 / DSM 3752 / JCM 8966 / VKM B-1809) (Halobacterium marismortui).